A 197-amino-acid chain; its full sequence is MAKQITSNCNFIFGASDIKSLPNESAPEIAFAGRSNVGKSSLINLLINSKKAARVSSKPGCTRQINFYSMYNDKFRLVDLPGYGYSHAGKEEIIQYLNLIEYYLIQRRNLRRVFVLIDSKVGLKEIDKDFIYWLICNNINFNVVLTKIDKVSQKSLGAVIEDIQRWINNENVSIHQMSIRVKHKITKVRDEFFKFTR.

Positions 25 to 197 (SAPEIAFAGR…VRDEFFKFTR (173 aa)) constitute an EngB-type G domain. GTP-binding positions include 33 to 40 (GRSNVGKS), 60 to 64 (GCTRQ), 79 to 82 (DLPG), 146 to 149 (TKID), and 177 to 179 (MSI). Residues serine 40 and threonine 62 each contribute to the Mg(2+) site.

It belongs to the TRAFAC class TrmE-Era-EngA-EngB-Septin-like GTPase superfamily. EngB GTPase family. Requires Mg(2+) as cofactor.

In terms of biological role, necessary for normal cell division and for the maintenance of normal septation. The chain is Probable GTP-binding protein EngB from Wolbachia sp. subsp. Drosophila simulans (strain wRi).